Here is a 912-residue protein sequence, read N- to C-terminus: MEVQLGLGRVYPRPPSKTYRGAFQNLFQSVREVIQNPGPRHPEATSAAPPGARLQQQHQHQQQHQHETSPRRQQQQQPEDGSPQRPSRGPTSYLALDEEQQPSQHQSAKGHPESGCVPEPVAMSRTGKGLEQQQPAPPDEDDSAAPSTLSLLGPTFPGLSSCSTDLKDILSEAGTMQLLQRQRQRQQQRQQQQQQQQQQQQQQQQQQEVVSEGGSSGRAREAAGAPTSSKDSYLGGSSTISDSAKELCKAVSVSMGLGVEALEHLSPGEQLRGDCMYAPLLGGPPPVCPCAPLTECKGSVLDDGPSKGTEETAEYSPFKTGYAKGLDGDSLGCSGSSQAGGSGTLEIPSTLSLYKSGTLDEAAAYQSRDYYNFQLSLAGPPPPPPSPHPHARIKLENPLDYGSAWAAAAAQCRYGDLASLHGGGAAGPGSGSPSATASSSWHTLFTAEEGQLYGPCGGSGGGGTGESVSVTPYGYTRPQQGLTGQEGDFPPPDVWYPGGVVSRMPYPSASCVKSEMGPWMESYSGPYGDMRLETTRDHVLPIDYYFPPQKTCLICGDEASGCHYGALTCGSCKVFFKRAAEGKQKYLCASRNDCTIDKFRRKNCPPCRLRKCYEAGMTLGARRLKKLGNLKLQEEGEASSTTSPTEETTQKLTVSHIEGYECQPIFLNVLEAIEPGVVCAGHDNNQPDSFAALLSSLNELGERQLVHVVKWAKALPGFRNLHVDDQMAVIQYSWMGLMVFAMGWRSFTNVNSRMLYFAPDLVFNEYRMHKSRMYSQCVRMRHLSQEFGWLQITPQEFLCMKALLLFSIIPVDGLKNQKFFDELRMNYIKDLDRIIACKRKNPTSCSRRFYQLTKLLDSVQPIARELHQFTFDLLIKSHMVSVDFPEMMAEIISVQVPKILSGKVKPIYFHTQ.

The segment at 1-550 (MEVQLGLGRV…PIDYYFPPQK (550 aa)) is modulating. Residues 1-579 (MEVQLGLGRV…GSCKVFFKRA (579 aa)) form an interaction with ZNF318 region. 2 disordered regions span residues 35 to 156 (QNPG…GPTF) and 204 to 236 (QQQQEVVSEGGSSGRAREAAGAPTSSKDSYLGG). S69 bears the Phosphoserine; by CDK9 mark. Residue S82 is modified to Phosphoserine. Positions 204–213 (QQQQEVVSEG) are enriched in low complexity. Positions 226–236 (PTSSKDSYLGG) are enriched in polar residues. Y233 is modified (phosphotyrosine; by CSK). Position 266 is a phosphoserine (S266). Residue Y277 is modified to Phosphotyrosine; by CSK and TNK2. Phosphotyrosine; by CSK is present on residues Y315, Y354, Y365, and Y370. The residue at position 371 (Y371) is a Phosphotyrosine; by CSK and TNK2. Positions 375–394 (LSLAGPPPPPPSPHPHARIK) are disordered. The segment covering 379-388 (GPPPPPPSPH) has biased composition (pro residues). A Glycyl lysine isopeptide (Lys-Gly) (interchain with G-Cter in SUMO) cross-link involves residue K394. At Y401 the chain carries Phosphotyrosine; by CSK. The interval 452 to 490 (LYGPCGGSGGGGTGESVSVTPYGYTRPQQGLTGQEGDFP) is disordered. Residues 455 to 465 (PCGGSGGGGTG) show a composition bias toward gly residues. A Glycyl lysine isopeptide (Lys-Gly) (interchain with G-Cter in SUMO) cross-link involves residue K513. A phosphotyrosine; by CSK mark is found at Y527 and Y544. The segment at 544–911 (YYFPPQKTCL…GKVKPIYFHT (368 aa)) is interaction with LPXN. A DNA-binding region (nuclear receptor) is located at residues 551–624 (TCLICGDEAS…AGMTLGARRL (74 aa)). 2 NR C4-type zinc fingers span residues 552–572 (CLICGDEASGCHYGALTCGSC) and 588–612 (CASRNDCTIDKFRRKNCPPCRLRKC). The tract at residues 564–654 (YGALTCGSCK…TEETTQKLTV (91 aa)) is interaction with HIPK3. An interaction with CCAR1 region spans residues 584 to 911 (QKYLCASRND…GKVKPIYFHT (328 aa)). Residues 617–911 (MTLGARRLKK…GKVKPIYFHT (295 aa)) form an interaction with KAT7 region. S643 carries the post-translational modification Phosphoserine; by STK4/MST1. The NR LBD domain occupies 661–892 (ECQPIFLNVL…DFPEMMAEII (232 aa)). 17beta-hydroxy-5alpha-androstan-3-one-binding residues include N698 and R745. Glycyl lysine isopeptide (Lys-Gly) (interchain with G-Cter in ubiquitin) cross-links involve residues K838 and K840. 17beta-hydroxy-5alpha-androstan-3-one is bound at residue T870. Y908 is modified (phosphotyrosine; by CSK).

This sequence belongs to the nuclear hormone receptor family. NR3 subfamily. Binds DNA as a homodimer. Part of a ternary complex containing AR, EFCAB6/DJBP and PARK7. Interacts with HIPK3 and NR0B2 in the presence of androgen. The ligand binding domain interacts with KAT7/HBO1 in the presence of dihydrotestosterone. Interacts with EFCAB6/DJBP, PQBP1, RANBP9, RBAK, SPDEF, SRA1, TGFB1I1 and RREB1. Interacts with ZMIZ1/ZIMP10 and ZMIZ2/ZMIP7 which both enhance its transactivation activity. Interacts with SLC30A9 and RAD54L2/ARIP4. Interacts with MACROD1 (via macro domain). Interacts via the ligand-binding domain with LXXLL and FXXLF motifs from NCOA1, NCOA2, NCOA3 and MAGEA11. Interacts (via nuclear receptor DNA binding domain and nuclear receptor ligand binding domain) with NCOA4. The AR N-terminal poly-Gln region binds Ran resulting in enhancement of AR-mediated transactivation. Ran-binding decreases as the poly-Gln length increases. Interacts with HIP1 (via coiled coil domain). Interacts (via ligand-binding domain) with TRIM68. Interacts with TNK2. Interacts with USP26. Interacts with RNF6. Interacts (regulated by RNF6 probably through polyubiquitination) with RNF14; regulates AR transcriptional activity. Interacts with PRMT2 and TRIM24. Interacts with RACK1. Interacts with RANBP10; this interaction enhances dihydrotestosterone-induced AR transcriptional activity. Interacts with PRPF6 in a hormone-independent way; this interaction enhances dihydrotestosterone-induced AR transcriptional activity. Interacts with STK4/MST1. Interacts with ZIPK/DAPK3. Interacts with LPXN. Interacts with MAK. Part of a complex containing AR, MAK and NCOA3. Interacts with CRY1. Interacts with CCAR1 and GATA2. Interacts with ZNF318. Interacts with BUD31. Interacts with ARID4A. Interacts with ARID4B. Interacts (via NR LBD domain) with ZBTB7A; the interaction is direct and androgen-dependent. Interacts with NCOR1. Interacts with NCOR2. Interacts with CRY2 in a ligand-dependent manner. In terms of processing, phosphorylation by TNK2 enhances the DNA-binding and transcriptional activity. Phosphorylation at Ser-69 by CDK9 regulates AR promoter selectivity and cell growth. Sumoylated on Lys-394 (major) and Lys-513. Ubiquitinated. Deubiquitinated by USP26. 'Lys-6' and 'Lys-27'-linked polyubiquitination by RNF6 modulates AR transcriptional activity and specificity. Post-translationally, palmitoylated by ZDHHC7 and ZDHHC21. Palmitoylation is required for plasma membrane targeting and for rapid intracellular signaling via ERK and AKT kinases and cAMP generation.

Its subcellular location is the nucleus. It is found in the cytoplasm. Steroid hormone receptors are ligand-activated transcription factors that regulate eukaryotic gene expression and affect cellular proliferation and differentiation in target tissues. Transcription factor activity is modulated by bound coactivator and corepressor proteins like ZBTB7A that recruits NCOR1 and NCOR2 to the androgen response elements/ARE on target genes, negatively regulating androgen receptor signaling and androgen-induced cell proliferation. Transcription activation is also down-regulated by NR0B2. Activated, but not phosphorylated, by HIPK3 and ZIPK/DAPK3. This Crocuta crocuta (Spotted hyena) protein is Androgen receptor (AR).